We begin with the raw amino-acid sequence, 303 residues long: uncharacterized protein (303 aa).

The signal sequence occupies residues 1–24 (MNRIALVFLYSLFLFNLAIGRVES). A glycan (N-linked (GlcNAc...) asparagine) is linked at asparagine 116. The segment at 124–179 (FTRQQQKKSHDDDDDDDDSDSDESKEEEEKKKRDRKHRRDKRQAITQGSQNNTDPN) is disordered. Positions 135–149 (DDDDDDDSDSDESKE) are enriched in acidic residues. Residues 155–164 (KRDRKHRRDK) are compositionally biased toward basic residues. Over residues 167-178 (AITQGSQNNTDP) the composition is skewed to polar residues.

This is an uncharacterized protein from Caenorhabditis elegans.